Reading from the N-terminus, the 526-residue chain is O-phosphoserine--tRNA(Cys) ligase (526 aa).

Substrate contacts are provided by residues 189–191 (HMT), 234–236 (SAS), 276–277 (YY), and N319.

It belongs to the class-II aminoacyl-tRNA synthetase family. O-phosphoseryl-tRNA(Cys) synthetase subfamily. In terms of assembly, homotetramer. Interacts with SepCysS.

It catalyses the reaction tRNA(Cys) + O-phospho-L-serine + ATP = O-phospho-L-seryl-tRNA(Cys) + AMP + diphosphate. In terms of biological role, catalyzes the attachment of O-phosphoserine (Sep) to tRNA(Cys). This Methanocorpusculum labreanum (strain ATCC 43576 / DSM 4855 / Z) protein is O-phosphoserine--tRNA(Cys) ligase.